The chain runs to 489 residues: N-succinylglutamate 5-semialdehyde dehydrogenase (489 aa).

223-228 (GSSNTG) lines the NAD(+) pocket. Residues Glu246 and Cys280 contribute to the active site.

It belongs to the aldehyde dehydrogenase family. AstD subfamily.

The enzyme catalyses N-succinyl-L-glutamate 5-semialdehyde + NAD(+) + H2O = N-succinyl-L-glutamate + NADH + 2 H(+). It functions in the pathway amino-acid degradation; L-arginine degradation via AST pathway; L-glutamate and succinate from L-arginine: step 4/5. Catalyzes the NAD-dependent reduction of succinylglutamate semialdehyde into succinylglutamate. The polypeptide is N-succinylglutamate 5-semialdehyde dehydrogenase (Idiomarina loihiensis (strain ATCC BAA-735 / DSM 15497 / L2-TR)).